A 30-amino-acid chain; its full sequence is Babycurus-toxin 1 (30 aa).

In terms of domain architecture, LCN-type CS-alpha/beta spans K2 to Q30.

Belongs to the long (4 C-C) scorpion toxin superfamily. Sodium channel inhibitor family. As to expression, expressed by the venom gland.

Its subcellular location is the secreted. In terms of biological role, binds to sodium channels (Nav) and inhibits both the activation and inactivation of the activated channels, thereby blocking neuronal transmission. The protein is Babycurus-toxin 1 of Babycurus centrurimorphus (East African scorpion).